We begin with the raw amino-acid sequence, 207 residues long: Coenzyme Q-binding protein COQ10, mitochondrial (207 aa).

A mitochondrion-targeting transit peptide spans 1–39 (MVLIIRPSQTLILFRKAMLKPIGRYPLKRNFFGLSGTNH).

The protein belongs to the COQ10 family. Interacts with coenzyme Q.

Its subcellular location is the mitochondrion inner membrane. Functionally, required for the function of coenzyme Q in the respiratory chain. May serve as a chaperone or may be involved in the transport of Q6 from its site of synthesis to the catalytic sites of the respiratory complexes. The polypeptide is Coenzyme Q-binding protein COQ10, mitochondrial (COQ10) (Saccharomyces cerevisiae (strain ATCC 204508 / S288c) (Baker's yeast)).